Here is a 3799-residue protein sequence, read N- to C-terminus: Polyketide synthase GfsE (3799 aa).

In terms of domain architecture, Ketosynthase family 3 (KS3) 1 spans 33–459; the sequence is HEPIAIIGMS…GTNAHAILEE (427 aa). Module stretches follow at residues 33–1730 and 1749–3494; these read HEPI…RSSA and DEAI…RTDL. Active-site for beta-ketoacyl synthase 1 activity residues include Cys206, His341, and His381. A disordered region spans residues 462–496; the sequence is AATGNPTEADTDQEPAASASPDRTTTLPAVPWPLS. The 314-residue stretch at 582–895 folds into the Malonyl-CoA:ACP transacylase (MAT) 1 domain; that stretch reads FVFPGQGSQW…LGEAHAHGAD (314 aa). An N-terminal hotdog fold 1 region spans residues 944 to 1069; that stretch reads HPLFGAVVEV…GVLELEARPE (126 aa). Positions 944–1222 constitute a PKS/mFAS DH 1 domain; the sequence is HPLFGAVVEV…SRPVAEEQLG (279 aa). Residue His976 is the Proton acceptor; for dehydratase activity 1 of the active site. A C-terminal hotdog fold 1 region spans residues 1081-1222; that stretch reads AEVVPVEGLY…SRPVAEEQLG (142 aa). Asp1142 serves as the catalytic Proton donor; for dehydratase activity 1. Residues 1382–1554 form the Ketoreductase (KR) 1 domain; it reads LLVTGASGVL…TSLSWGLWAE (173 aa). The Carrier 1 domain maps to 1652–1730; the sequence is EAERAVLELV…ALATHIRSSA (79 aa). An O-(pantetheine 4'-phosphoryl)serine modification is found at Ser1690. In terms of domain architecture, Ketosynthase family 3 (KS3) 2 spans 1749-2174; the sequence is DEAIAIVGMA…GTNAHVILEQ (426 aa). Active-site for beta-ketoacyl synthase 2 activity residues include Cys1921, His2056, and His2096. Residues 2284-2604 enclose the Malonyl-CoA:ACP transacylase (MAT) 2 domain; the sequence is FVFPGQGSQW…VSLAKVHTHG (321 aa). Residues 2656-2781 are N-terminal hotdog fold 2; that stretch reads HPLLTGVVDL…GTLAVDADHD (126 aa). One can recognise a PKS/mFAS DH 2 domain in the interval 2656–2936; sequence HPLLTGVVDL…TRPVTAAQFA (281 aa). The active-site Proton acceptor; for dehydratase activity 2 is the His2688. Residues 2794-2936 form a C-terminal hotdog fold 2 region; that stretch reads ADPVDLTEVY…TRPVTAAQFA (143 aa). Asp2855 serves as the catalytic Proton donor; for dehydratase activity 2. In terms of domain architecture, Ketoreductase (KR) 2 spans 3142 to 3314; sequence LLVTGASGVL…TALSWGLWAE (173 aa). One can recognise a Carrier 2 domain in the interval 3419 to 3494; the sequence is AALLDLVGAQ…ALAAQLRTDL (76 aa). Ser3454 carries the O-(pantetheine 4'-phosphoryl)serine modification.

Pantetheine 4'-phosphate is required as a cofactor.

The protein operates within antibiotic biosynthesis. Its function is as follows. Fifth protein in the synthesis of the 16-membered macrolide antibiotics FD-891 and FD-892. Composed of 2 modules. Modifies the product of GfsD by multiple rounds of addition of methylmalonyl-CoA and other modifications to help generate the final products. This chain is Polyketide synthase GfsE, found in Streptomyces halstedii.